The primary structure comprises 326 residues: Type II methyltransferase M.EcoRI (326 aa).

It belongs to the N(4)/N(6)-methyltransferase family. Monomer.

It carries out the reaction a 2'-deoxyadenosine in DNA + S-adenosyl-L-methionine = an N(6)-methyl-2'-deoxyadenosine in DNA + S-adenosyl-L-homocysteine + H(+). Its function is as follows. A methylase that recognizes the double-stranded sequence 5'-GAATTC-3', methylates A-3 on both strands, and protects the DNA from cleavage by the EcoRI endonuclease. The protein is Type II methyltransferase M.EcoRI (ecoRIM) of Escherichia coli.